A 513-amino-acid chain; its full sequence is ATP synthase subunit alpha (513 aa).

169-176 (GDRQTGKT) serves as a coordination point for ATP.

The protein belongs to the ATPase alpha/beta chains family. F-type ATPases have 2 components, CF(1) - the catalytic core - and CF(0) - the membrane proton channel. CF(1) has five subunits: alpha(3), beta(3), gamma(1), delta(1), epsilon(1). CF(0) has three main subunits: a(1), b(2) and c(9-12). The alpha and beta chains form an alternating ring which encloses part of the gamma chain. CF(1) is attached to CF(0) by a central stalk formed by the gamma and epsilon chains, while a peripheral stalk is formed by the delta and b chains.

Its subcellular location is the cell inner membrane. The catalysed reaction is ATP + H2O + 4 H(+)(in) = ADP + phosphate + 5 H(+)(out). Functionally, produces ATP from ADP in the presence of a proton gradient across the membrane. The alpha chain is a regulatory subunit. The chain is ATP synthase subunit alpha from Yersinia enterocolitica serotype O:8 / biotype 1B (strain NCTC 13174 / 8081).